The sequence spans 339 residues: NADH-quinone oxidoreductase subunit H (339 aa).

The next 8 membrane-spanning stretches (helical) occupy residues Ile-9–Cys-29, Ile-82–Ile-102, Val-115–Gly-135, Met-161–Val-181, Met-187–Leu-207, Met-235–Thr-255, Ile-275–Ile-295, and Gly-311–Ile-331.

It belongs to the complex I subunit 1 family. As to quaternary structure, NDH-1 is composed of 14 different subunits. Subunits NuoA, H, J, K, L, M, N constitute the membrane sector of the complex.

It is found in the cell inner membrane. The catalysed reaction is a quinone + NADH + 5 H(+)(in) = a quinol + NAD(+) + 4 H(+)(out). Functionally, NDH-1 shuttles electrons from NADH, via FMN and iron-sulfur (Fe-S) centers, to quinones in the respiratory chain. The immediate electron acceptor for the enzyme in this species is believed to be ubiquinone. Couples the redox reaction to proton translocation (for every two electrons transferred, four hydrogen ions are translocated across the cytoplasmic membrane), and thus conserves the redox energy in a proton gradient. This subunit may bind ubiquinone. The protein is NADH-quinone oxidoreductase subunit H of Rickettsia bellii (strain OSU 85-389).